A 95-amino-acid polypeptide reads, in one-letter code: Acylphosphatase (95 aa).

One can recognise an Acylphosphatase-like domain in the interval 10–95; sequence CIHATVSGKV…VEDYSDFRVR (86 aa). Catalysis depends on residues Arg25 and Asn43.

The protein belongs to the acylphosphatase family.

It carries out the reaction an acyl phosphate + H2O = a carboxylate + phosphate + H(+). This is Acylphosphatase (acyP) from Coxiella burnetii (strain Dugway 5J108-111).